The chain runs to 331 residues: Taste receptor type 2 member 38 (331 aa).

Topologically, residues 1–17 (MLTLTPVLTVSYEAKIS) are extracellular. The chain crosses the membrane as a helical span at residues 18–38 (FLFLSVVEFAVGIMANAFIVL). Over 39-54 (VNFWDMVKKQPLNNCD) the chain is Cytoplasmic. A helical membrane pass occupies residues 55–75 (IALLCLSITRLFLQGLLLLDA). At 76–94 (IQLACFQQMKDPLSHNYQA) the chain is on the extracellular side. The chain crosses the membrane as a helical span at residues 95–115 (ILTLWMSANQVSLWLAACLSL). Topologically, residues 116–142 (LYCAKIVRFSHTFPLHLASWVSRRFLQ) are cytoplasmic. Residues 143-163 (MLLVALLFSGVCTALCLWDFF) traverse the membrane as a helical segment. At 164–198 (SRSHTVVTSMLHMNNTEFNLQIEKLNFFYSFVFCN) the chain is on the extracellular side. Asn-177 carries an N-linked (GlcNAc...) asparagine glycan. The chain crosses the membrane as a helical span at residues 199–219 (VGSVPPSLVFLISSGVLVISL). The Cytoplasmic portion of the chain corresponds to 220 to 243 (GNHMRTMKSQTRGSRDPSLEAHVR). A helical membrane pass occupies residues 244–264 (AIIFLVSFLCFYVVSFCAALI). The Extracellular segment spans residues 265 to 276 (SIPLLVLWHNKG). The helical transmembrane segment at 277–297 (GVMVCIGMMAACPSGHAAILI) threads the bilayer. Topologically, residues 298–331 (SGNAKLKKVIVTILFWFQSRQKVRRVHKVLPRIL) are cytoplasmic.

It belongs to the G-protein coupled receptor T2R family. Expressed in tongue, stomach and duodenum.

Its subcellular location is the membrane. Its function is as follows. Putative taste receptor which may play a role in the perception of bitterness. The polypeptide is Taste receptor type 2 member 38 (Tas2r38) (Rattus norvegicus (Rat)).